Reading from the N-terminus, the 58-residue chain is Small ribosomal subunit protein bS21C (58 aa).

The interval Tyr-38 to Tyr-58 is disordered. Over residues Ala-49–Tyr-58 the composition is skewed to basic and acidic residues.

The protein belongs to the bacterial ribosomal protein bS21 family.

This Nostoc sp. (strain PCC 7120 / SAG 25.82 / UTEX 2576) protein is Small ribosomal subunit protein bS21C (rpsU3).